The following is a 181-amino-acid chain: MPNYYLADDTKYTRPSTSAMSNLTELCGLKGLADSMARFDPVTGEKNKLRKSYKNQLLDLTGKFDIPSQPSLVRIIRDPVLAETGGKSLSVFDRDLLSRGLDFDATPSTGIPGFNPAMLGMPGPGKPGIGPQVGGNRLLSVRRSYNTESARESSNNEETPMARRKRKGDDDTDGERRRKRK.

Residues 120–181 (GMPGPGKPGI…TDGERRRKRK (62 aa)) are disordered. The segment covering 122-133 (PGPGKPGIGPQV) has biased composition (gly residues). Residues 143-158 (RSYNTESARESSNNEE) are compositionally biased toward polar residues.

The protein belongs to the Mediator complex subunit 19 family. As to quaternary structure, component of the Mediator complex.

The protein resides in the nucleus. In terms of biological role, component of the Mediator complex, a coactivator involved in the regulated transcription of nearly all RNA polymerase II-dependent genes. Mediator functions as a bridge to convey information from gene-specific regulatory proteins to the basal RNA polymerase II transcription machinery. Mediator is recruited to promoters by direct interactions with regulatory proteins and serves as a scaffold for the assembly of a functional preinitiation complex with RNA polymerase II and the general transcription factors. The protein is Mediator of RNA polymerase II transcription subunit 19 (ROX3) of Yarrowia lipolytica (strain CLIB 122 / E 150) (Yeast).